The sequence spans 422 residues: Zinc finger protein 550 (422 aa).

The KRAB domain maps to 12 to 83; it reads VTFKDVAVTF…KRGLSHATCA (72 aa). Residues 113–158 form a disordered region; it reads LESSTSSDSRLGRARDEEGLLEMQKGKVTPETDLHKETHLGKVSLE. Positions 122-152 are enriched in basic and acidic residues; it reads RLGRARDEEGLLEMQKGKVTPETDLHKETHL. 8 C2H2-type zinc fingers span residues 203–225, 231–253, 259–281, 287–309, 315–337, 343–365, 371–393, and 399–421; these read YKCKQCGKGFNRKWYLVRHQRVH, YECNACGKAFSQSSTLIRHYLIH, YKCLECGKAFKRRSYLMQHHPIH, YECSQCRKAFTHRSTFIRHNRTH, FECKECEKAFSNRAHLIQHYIIH, YDCMACGKAFRCSSELIQHQRIH, YECTQCGKAFHRSTYLIQHSVIH, and YKCIECGKAFKRRSHLLQHQRVH.

The protein belongs to the krueppel C2H2-type zinc-finger protein family.

It localises to the nucleus. Its function is as follows. May be involved in transcriptional regulation. The protein is Zinc finger protein 550 (ZNF550) of Homo sapiens (Human).